A 120-amino-acid chain; its full sequence is Large ribosomal subunit protein uL18 (120 aa).

Belongs to the universal ribosomal protein uL18 family. As to quaternary structure, part of the 50S ribosomal subunit; part of the 5S rRNA/L5/L18/L25 subcomplex. Contacts the 5S and 23S rRNAs.

In terms of biological role, this is one of the proteins that bind and probably mediate the attachment of the 5S RNA into the large ribosomal subunit, where it forms part of the central protuberance. The chain is Large ribosomal subunit protein uL18 from Rhizobium etli (strain ATCC 51251 / DSM 11541 / JCM 21823 / NBRC 15573 / CFN 42).